A 484-amino-acid polypeptide reads, in one-letter code: 6-phosphogluconate dehydrogenase, decarboxylating (484 aa).

NADP(+) contacts are provided by residues 11-16, 34-36, 76-78, and asparagine 104; these read GLAVMG, NRT, and VRA. Substrate-binding positions include asparagine 104 and 130–132; that span reads SGG. The active-site Proton acceptor is the lysine 185. Residue 188–189 coordinates substrate; it reads HN. The active-site Proton donor is glutamate 192. Substrate contacts are provided by tyrosine 193, lysine 262, arginine 289, arginine 447, and histidine 453.

Belongs to the 6-phosphogluconate dehydrogenase family. In terms of assembly, homodimer.

The enzyme catalyses 6-phospho-D-gluconate + NADP(+) = D-ribulose 5-phosphate + CO2 + NADPH. It participates in carbohydrate degradation; pentose phosphate pathway; D-ribulose 5-phosphate from D-glucose 6-phosphate (oxidative stage): step 3/3. Catalyzes the oxidative decarboxylation of 6-phosphogluconate to ribulose 5-phosphate and CO(2), with concomitant reduction of NADP to NADPH. The sequence is that of 6-phosphogluconate dehydrogenase, decarboxylating from Aggregatibacter actinomycetemcomitans (Actinobacillus actinomycetemcomitans).